The sequence spans 427 residues: Enolase 2 (427 aa).

Gln-165 provides a ligand contact to (2R)-2-phosphoglycerate. Catalysis depends on Glu-207, which acts as the Proton donor. Positions 244, 287, and 314 each coordinate Mg(2+). 4 residues coordinate (2R)-2-phosphoglycerate: Lys-339, Arg-368, Ser-369, and Lys-390. Lys-339 functions as the Proton acceptor in the catalytic mechanism.

It belongs to the enolase family. As to quaternary structure, component of the RNA degradosome, a multiprotein complex involved in RNA processing and mRNA degradation. Mg(2+) serves as cofactor.

The protein resides in the cytoplasm. The protein localises to the secreted. Its subcellular location is the cell surface. The catalysed reaction is (2R)-2-phosphoglycerate = phosphoenolpyruvate + H2O. It participates in carbohydrate degradation; glycolysis; pyruvate from D-glyceraldehyde 3-phosphate: step 4/5. Its function is as follows. Catalyzes the reversible conversion of 2-phosphoglycerate (2-PG) into phosphoenolpyruvate (PEP). It is essential for the degradation of carbohydrates via glycolysis. The polypeptide is Enolase 2 (Pseudomonas syringae pv. tomato (strain ATCC BAA-871 / DC3000)).